The following is a 391-amino-acid chain: Phosphoglycerate kinase (391 aa).

Substrate-binding positions include 21 to 23 (DFN), Arg-36, 59 to 62 (HLGR), Arg-113, and Arg-146. Residues Lys-197, Glu-319, and 345-348 (GGDT) contribute to the ATP site.

The protein belongs to the phosphoglycerate kinase family. As to quaternary structure, monomer.

It is found in the cytoplasm. It carries out the reaction (2R)-3-phosphoglycerate + ATP = (2R)-3-phospho-glyceroyl phosphate + ADP. It functions in the pathway carbohydrate degradation; glycolysis; pyruvate from D-glyceraldehyde 3-phosphate: step 2/5. The sequence is that of Phosphoglycerate kinase from Methylococcus capsulatus (strain ATCC 33009 / NCIMB 11132 / Bath).